Reading from the N-terminus, the 358-residue chain is Glycerol-3-phosphate dehydrogenase [NAD(P)+] (358 aa).

Ser-33, Phe-34, Arg-54, and Lys-128 together coordinate NADPH. Sn-glycerol 3-phosphate is bound by residues Lys-128 and Gly-156. Residue Ala-160 coordinates NADPH. Sn-glycerol 3-phosphate-binding residues include Lys-211, Asp-264, Ser-274, Arg-275, and Asn-276. The active-site Proton acceptor is Lys-211. Residue Arg-275 participates in NADPH binding. Positions 299 and 301 each coordinate NADPH.

It belongs to the NAD-dependent glycerol-3-phosphate dehydrogenase family.

Its subcellular location is the cytoplasm. The catalysed reaction is sn-glycerol 3-phosphate + NAD(+) = dihydroxyacetone phosphate + NADH + H(+). It catalyses the reaction sn-glycerol 3-phosphate + NADP(+) = dihydroxyacetone phosphate + NADPH + H(+). It participates in membrane lipid metabolism; glycerophospholipid metabolism. Catalyzes the reduction of the glycolytic intermediate dihydroxyacetone phosphate (DHAP) to sn-glycerol 3-phosphate (G3P), the key precursor for phospholipid synthesis. The protein is Glycerol-3-phosphate dehydrogenase [NAD(P)+] of Saccharophagus degradans (strain 2-40 / ATCC 43961 / DSM 17024).